Here is a 477-residue protein sequence, read N- to C-terminus: RTX-III toxin determinant D (477 aa).

Residues 1–59 (MKLWILGLGEFFQRYRNIWREIWKIRKQLDTPARQKDENEFLPRHLELIETPISKKPRL) lie on the Cytoplasmic side of the membrane. The helical transmembrane segment at 60–77 (IAYLIMLFLFLAIVISII) threads the bilayer. At 78–477 (SKVEIVASAT…ESITESLRER (400 aa)) the chain is on the periplasmic side.

The protein belongs to the membrane fusion protein (MFP) (TC 8.A.1) family.

The protein localises to the cell inner membrane. Its function is as follows. Involved in the transport of the toxin RTX-III. The chain is RTX-III toxin determinant D (apxIIID) from Actinobacillus pleuropneumoniae (Haemophilus pleuropneumoniae).